A 235-amino-acid polypeptide reads, in one-letter code: MSNVLLSPNGYVFASPKPLGRFINSKSGGRKLFFSVVRASSDDADCNAEECAPEKEVGTVSMEWLAGEKTKVVGTFPPRKPRGWTGYVEKDTAGQTNVYSIEPAVYVAESAISSGTAGSSADGAENTAAIVAGIALIAVAAASSILLQVGKDAPTRPKAVDYSGPSLSYYINKFKPSEIVQPSTPSVTEAPPVAELETSLPETPSVAQQETSLPETMASEAQPEASSVPTTSSTS.

The helical transmembrane segment at 127–147 threads the bilayer; it reads TAAIVAGIALIAVAAASSILL. Residues 181–235 are disordered; the sequence is QPSTPSVTEAPPVAELETSLPETPSVAQQETSLPETMASEAQPEASSVPTTSSTS. 2 stretches are compositionally biased toward polar residues: residues 200-214 and 224-235; these read LPETPSVAQQETSLP and EASSVPTTSSTS.

In terms of assembly, interacts with psbA, psbB, psbC and psbD.

It is found in the plastid. It localises to the chloroplast thylakoid membrane. In terms of biological role, interacts with photosystem II (PSII) core complexes and participates in the maintenance of normal PSII activity under photoinhibitory stress. May protect against photodamage or stabilize PSII under high-light stress. Participates in the maintainance of proper PSII function under high-light stress by protecting PSII from photooxidative damage. The protein is Protein MAINTENANCE OF PSII UNDER HIGH LIGHT 1 of Arabidopsis thaliana (Mouse-ear cress).